Reading from the N-terminus, the 401-residue chain is MTQDASPILTSLLDTDAYKLHMQQAVFHRYRHITVAAEFRCRGDELLGEYADEIRHQITLMSQLALTDDEYQYLSGLPFFKNDYLNWLRAFRFNPEQVTVSDNDGELDIRITGLWCETILWEVPLLAVISEIVHRRRSAHVTADLAVSQLRSKLQQFNALSADIDITHFKLMDFGTRRRFSREIQHAIVSHLKDEFPYLVGTSNYDLARKLSLDPVGTQAHEWFQAHQQISPVLANSQRVALQAWLDEYPNQLGVALTDCITMDAFLRDFDKTFADRYQGLRHDSGDPVEWGEKAIAHYEKLGIDPMSKTLVFSDNLDLEKALSLYRHFYQRVKLVFGIGTRLTCDIPGIKPLNIVIKLVECNDKPVAKLSDSPGKTICHDPAFVDELREAFALPLVKKAS.

Phosphohistidine; by autocatalysis is present on histidine 221.

This sequence belongs to the NAPRTase family. In terms of processing, transiently phosphorylated on a His residue during the reaction cycle. Phosphorylation strongly increases the affinity for substrates and increases the rate of nicotinate D-ribonucleotide production. Dephosphorylation regenerates the low-affinity form of the enzyme, leading to product release.

The catalysed reaction is nicotinate + 5-phospho-alpha-D-ribose 1-diphosphate + ATP + H2O = nicotinate beta-D-ribonucleotide + ADP + phosphate + diphosphate. It participates in cofactor biosynthesis; NAD(+) biosynthesis; nicotinate D-ribonucleotide from nicotinate: step 1/1. Catalyzes the synthesis of beta-nicotinate D-ribonucleotide from nicotinate and 5-phospho-D-ribose 1-phosphate at the expense of ATP. The protein is Nicotinate phosphoribosyltransferase of Yersinia enterocolitica serotype O:8 / biotype 1B (strain NCTC 13174 / 8081).